Consider the following 180-residue polypeptide: Oligoribonuclease (180 aa).

The 164-residue stretch at 7–170 (LIWIDLEMTG…DDIRESLAEL (164 aa)) folds into the Exonuclease domain. Y128 is an active-site residue.

Belongs to the oligoribonuclease family.

Its subcellular location is the cytoplasm. Functionally, 3'-to-5' exoribonuclease specific for small oligoribonucleotides. The sequence is that of Oligoribonuclease from Pectobacterium atrosepticum (strain SCRI 1043 / ATCC BAA-672) (Erwinia carotovora subsp. atroseptica).